We begin with the raw amino-acid sequence, 257 residues long: Aquaporin TIP4-2 (257 aa).

Helical transmembrane passes span 32 to 52 (LVLTFLFVFTGVSASMAAGAG) and 63 to 83 (TLAAVAIAHALAAGVLVTAGF). The NPA 1 motif lies at 91–93 (NPA). 3 consecutive transmembrane segments (helical) span residues 107–127 (LRALLYVAAQLLASSLACILL), 150–170 (GLVMEVILTFSLLFVTYAMIL), and 178–198 (TIGPLLTGLIVGANSLAGGNF). The short motif at 204-206 (NPA) is the NPA 2 element. Residues 225–245 (WIGPLLGGSLAGFVYESLFMV) traverse the membrane as a helical segment.

It belongs to the MIP/aquaporin (TC 1.A.8) family. TIP (TC 1.A.8.10) subfamily.

The protein resides in the vacuole membrane. In terms of biological role, aquaporins facilitate the transport of water and small neutral solutes across cell membranes. This is Aquaporin TIP4-2 (TIP4-2) from Zea mays (Maize).